We begin with the raw amino-acid sequence, 345 residues long: S-adenosylmethionine:tRNA ribosyltransferase-isomerase (345 aa).

The protein belongs to the QueA family. Monomer.

Its subcellular location is the cytoplasm. It carries out the reaction 7-aminomethyl-7-carbaguanosine(34) in tRNA + S-adenosyl-L-methionine = epoxyqueuosine(34) in tRNA + adenine + L-methionine + 2 H(+). It participates in tRNA modification; tRNA-queuosine biosynthesis. Functionally, transfers and isomerizes the ribose moiety from AdoMet to the 7-aminomethyl group of 7-deazaguanine (preQ1-tRNA) to give epoxyqueuosine (oQ-tRNA). The chain is S-adenosylmethionine:tRNA ribosyltransferase-isomerase from Shewanella woodyi (strain ATCC 51908 / MS32).